Here is a 1228-residue protein sequence, read N- to C-terminus: Calcium-transporting ATPase (1228 aa).

Topologically, residues M1–D63 are cytoplasmic. Residues L64 to L81 form a helical membrane-spanning segment. Topologically, residues L82–C92 are extracellular. The chain crosses the membrane as a helical span at residues D93–V112. The Cytoplasmic portion of the chain corresponds to W113–K270. Residues I271–I291 traverse the membrane as a helical segment. Residues H292–L300 lie on the Extracellular side of the membrane. The chain crosses the membrane as a helical span at residues Y301–V321. Topologically, residues I322–R974 are cytoplasmic. The 4-aspartylphosphate intermediate role is filled by D358. Disordered stretches follow at residues M452–K478 and M562–A613. Residues F589 to N604 show a composition bias toward polar residues. Position 716 (K716) interacts with ATP. Residues Y975–G994 form a helical membrane-spanning segment. The Extracellular portion of the chain corresponds to I995–A1000. A helical membrane pass occupies residues P1001 to F1021. Topologically, residues N1022–N1042 are cytoplasmic. The helical transmembrane segment at G1043–W1067 threads the bilayer. At F1068–I1118 the chain is on the extracellular side. A helical transmembrane segment spans residues K1119–L1140. The Cytoplasmic segment spans residues S1141–P1151. A helical membrane pass occupies residues W1152–L1172. Over Y1173 to P1185 the chain is Extracellular. A helical membrane pass occupies residues L1186–E1206. Over I1207–D1228 the chain is Cytoplasmic.

This sequence belongs to the cation transport ATPase (P-type) (TC 3.A.3) family.

The protein resides in the membrane. It carries out the reaction Ca(2+)(in) + ATP + H2O = Ca(2+)(out) + ADP + phosphate + H(+). In terms of biological role, this magnesium-dependent enzyme catalyzes the hydrolysis of ATP coupled with the transport of the calcium. The polypeptide is Calcium-transporting ATPase (ATP6) (Plasmodium falciparum (isolate K1 / Thailand)).